We begin with the raw amino-acid sequence, 115 residues long: Glutaredoxin 4 (115 aa).

One can recognise a Glutaredoxin domain in the interval 5–107 (IEKIQRQIAE…QLIKETAAKY (103 aa)). Lys-22 lines the glutathione pocket. Cys-30 is a binding site for [2Fe-2S] cluster. Glutathione-binding positions include Arg-59, Phe-71, and 84-85 (CD).

This sequence belongs to the glutaredoxin family. Monothiol subfamily. Homodimer.

The protein resides in the cytoplasm. Functionally, monothiol glutaredoxin involved in the biogenesis of iron-sulfur clusters. In Shigella flexneri, this protein is Glutaredoxin 4 (grxD).